The chain runs to 98 residues: Flagellar hook-basal body complex protein FliE (98 aa).

The disordered stretch occupies residues K22–T56. Over residues T23–T56 the composition is skewed to polar residues.

The protein belongs to the FliE family.

The protein resides in the bacterial flagellum basal body. The sequence is that of Flagellar hook-basal body complex protein FliE from Listeria innocua serovar 6a (strain ATCC BAA-680 / CLIP 11262).